Here is a 321-residue protein sequence, read N- to C-terminus: NADH-ubiquinone oxidoreductase chain 1 (321 aa).

The next 8 membrane-spanning stretches (helical) occupy residues 7–27, 73–93, 104–124, 148–168, 175–195, 227–247, 256–276, and 297–317; these read ITNS…LTLM, ILLI…WTPI, LGLL…LWAG, VTLG…TMQL, HTWL…STLA, FFLA…ILFI, ELFL…FLWI, and LPLT…ISGI.

This sequence belongs to the complex I subunit 1 family.

It is found in the mitochondrion inner membrane. The catalysed reaction is a ubiquinone + NADH + 5 H(+)(in) = a ubiquinol + NAD(+) + 4 H(+)(out). Functionally, core subunit of the mitochondrial membrane respiratory chain NADH dehydrogenase (Complex I) that is believed to belong to the minimal assembly required for catalysis. Complex I functions in the transfer of electrons from NADH to the respiratory chain. The immediate electron acceptor for the enzyme is believed to be ubiquinone. In Varanus dumerilii (Dumeril's monitor), this protein is NADH-ubiquinone oxidoreductase chain 1 (MT-ND1).